The following is a 275-amino-acid chain: 2,3,4,5-tetrahydropyridine-2,6-dicarboxylate N-succinyltransferase (275 aa).

Substrate-binding residues include R108 and D145.

It belongs to the transferase hexapeptide repeat family. Homotrimer.

It localises to the cytoplasm. It catalyses the reaction (S)-2,3,4,5-tetrahydrodipicolinate + succinyl-CoA + H2O = (S)-2-succinylamino-6-oxoheptanedioate + CoA. The protein operates within amino-acid biosynthesis; L-lysine biosynthesis via DAP pathway; LL-2,6-diaminopimelate from (S)-tetrahydrodipicolinate (succinylase route): step 1/3. This is 2,3,4,5-tetrahydropyridine-2,6-dicarboxylate N-succinyltransferase from Roseobacter denitrificans (strain ATCC 33942 / OCh 114) (Erythrobacter sp. (strain OCh 114)).